The sequence spans 528 residues: GTPase Der (528 aa).

2 stretches are compositionally biased toward acidic residues: residues 1–12 (MDVEGAFADEEE) and 30–62 (GYDDDFAPDDSDEDEDDDDYEFDEDDFAAPDFG). A disordered region spans residues 1 to 62 (MDVEGAFADE…EDDFAAPDFG (62 aa)). EngA-type G domains are found at residues 90–253 (CTVA…PEEP) and 263–436 (RRVA…ENWD). GTP contacts are provided by residues 96 to 103 (GRPNVGKS), 143 to 147 (DTGGW), 205 to 208 (NKFD), 269 to 276 (GKPNVGKS), 316 to 320 (DTAGL), and 381 to 384 (NKWD). The region spanning 437 to 519 (RRVSTGQLNN…PIRIAVRVRE (83 aa)) is the KH-like domain.

It belongs to the TRAFAC class TrmE-Era-EngA-EngB-Septin-like GTPase superfamily. EngA (Der) GTPase family. In terms of assembly, associates with the 50S ribosomal subunit.

Its function is as follows. GTPase that plays an essential role in the late steps of ribosome biogenesis. The protein is GTPase Der of Corynebacterium efficiens (strain DSM 44549 / YS-314 / AJ 12310 / JCM 11189 / NBRC 100395).